A 1017-amino-acid chain; its full sequence is Probable isoleucine--tRNA ligase, cytoplasmic (1017 aa).

The 'HIGH' region motif lies at 45-55 (PFATGLPHYGH). The 'KMSKS' region signature appears at 609 to 613 (KMSKR). Lys-612 is a binding site for ATP.

Belongs to the class-I aminoacyl-tRNA synthetase family.

It is found in the cytoplasm. It catalyses the reaction tRNA(Ile) + L-isoleucine + ATP = L-isoleucyl-tRNA(Ile) + AMP + diphosphate. This Encephalitozoon cuniculi (strain GB-M1) (Microsporidian parasite) protein is Probable isoleucine--tRNA ligase, cytoplasmic.